The following is a 379-amino-acid chain: Glucose-1-phosphate adenylyltransferase (379 aa).

Alpha-D-glucose 1-phosphate contacts are provided by residues glycine 164, 179–180 (EK), and serine 190.

This sequence belongs to the bacterial/plant glucose-1-phosphate adenylyltransferase family. Homotetramer.

It carries out the reaction alpha-D-glucose 1-phosphate + ATP + H(+) = ADP-alpha-D-glucose + diphosphate. The protein operates within glycan biosynthesis; glycogen biosynthesis. Its function is as follows. Involved in the biosynthesis of ADP-glucose, a building block required for the elongation reactions to produce glycogen. Catalyzes the reaction between ATP and alpha-D-glucose 1-phosphate (G1P) to produce pyrophosphate and ADP-Glc. This is Glucose-1-phosphate adenylyltransferase from Lactiplantibacillus plantarum (strain ATCC BAA-793 / NCIMB 8826 / WCFS1) (Lactobacillus plantarum).